The sequence spans 314 residues: Protein EXORDIUM (314 aa).

The N-terminal stretch at 1–21 (MYLLVFKLFLFLSLLQISVSA) is a signal peptide.

This sequence belongs to the EXORDIUM family. In terms of tissue distribution, expressed in root tips, vascular tissue of roots, shoot apex, rosette leaves and embryos.

The protein resides in the secreted. Its subcellular location is the extracellular space. It localises to the apoplast. Functionally, required for cell expansion in leaves. May mediate brassinosteroid (BR)-induced leaf growth. May play a role in the control of BR responses in roots. May be involved in signaling processes that coordinate BR responses with environmental or developmental signals. The sequence is that of Protein EXORDIUM (EXO) from Arabidopsis thaliana (Mouse-ear cress).